The sequence spans 610 residues: Zinc metalloproteinase-disintegrin-like acurhagin (610 aa).

An N-terminal signal peptide occupies residues 1 to 20 (MIQVLLVTICLAAFPYQGSS). A propeptide spanning residues 21-191 (IILESGDVND…ISQLNLIPEQ (171 aa)) is cleaved from the precursor. Gln192 carries the post-translational modification Pyrrolidone carboxylic acid. The Peptidase M12B domain maps to 198–394 (KYVETVVVVD…HNPECIDNEP (197 aa)). Glu201 and Asp285 together coordinate Ca(2+). Intrachain disulfides connect Cys309–Cys389, Cys349–Cys373, and Cys351–Cys356. His334 is a Zn(2+) binding site. The active site involves Glu335. Zn(2+)-binding residues include His338 and His344. Asn372 carries an N-linked (GlcNAc...) asparagine glycan. Ca(2+) contacts are provided by Cys389, Asn392, Asn407, Leu409, Glu411, Glu414, and Asp417. A Disintegrin domain is found at 402–488 (PPLCGNELLE…ECPADVFHKN (87 aa)). 14 disulfides stabilise this stretch: Cys405-Cys434, Cys416-Cys429, Cys418-Cys424, Cys428-Cys451, Cys442-Cys448, Cys447-Cys473, Cys460-Cys480, Cys467-Cys499, Cys492-Cys504, Cys511-Cys561, Cys526-Cys572, Cys539-Cys549, Cys556-Cys598, and Cys592-Cys603. The D/ECD-tripeptide motif lies at 466–468 (ECD). Positions 468, 469, 471, 483, and 484 each coordinate Ca(2+).

It belongs to the venom metalloproteinase (M12B) family. P-III subfamily. P-IIIa sub-subfamily. As to quaternary structure, monomer. It depends on Zn(2+) as a cofactor. Post-translationally, N-glycosylated. Expressed by the venom gland.

It is found in the secreted. With respect to regulation, the proteinase activity is slightly enhanced by Ca(2+) and Mg(2+), but is completely inhibited by Zn(2+). Is completely inhibited by phenanthroline and EDTA. Not inhibited by PMSF. Snake venom zinc metalloprotease that causes hemorrhage and dose-dependently inhibits platelet aggregation triggered by collagen. This inhibition is due to its binding to glycoprotein VI (GP6) and collagen. The binding to GP6 results in inhibition of the signaling pathway (decrease of tyrosine phosphorylation of signaling proteins such as Syk, LAT, PI3-K and PLCgamma2). Preferentially cleaves alpha chain (FGA) of fibrinogen, followed by beta chain (FGB). Also degrades the extracellular matrix protein fibronectin (FN1), and cleaves collagen and von Willebrand factor (VWF). The protein is Zinc metalloproteinase-disintegrin-like acurhagin of Deinagkistrodon acutus (Hundred-pace snake).